A 147-amino-acid polypeptide reads, in one-letter code: Large ribosomal subunit protein uL15 (147 aa).

A compositionally biased stretch (basic residues) spans 1–28; the sequence is MIRRRKKVRKLRGSHTHGWGCKKKHRGG. Residues 1-43 form a disordered region; sequence MIRRRKKVRKLRGSHTHGWGCKKKHRGGGSKGGRGMAGTGKRN. A compositionally biased stretch (gly residues) spans 29–38; the sequence is GSKGGRGMAG.

This sequence belongs to the universal ribosomal protein uL15 family. As to quaternary structure, part of the 50S ribosomal subunit.

Its function is as follows. Binds to the 23S rRNA. This is Large ribosomal subunit protein uL15 from Pyrococcus furiosus (strain ATCC 43587 / DSM 3638 / JCM 8422 / Vc1).